Here is a 159-residue protein sequence, read N- to C-terminus: 2-C-methyl-D-erythritol 2,4-cyclodiphosphate synthase (159 aa).

Residues Asp-8 and His-10 each contribute to the a divalent metal cation site. 4-CDP-2-C-methyl-D-erythritol 2-phosphate contacts are provided by residues Asp-8–His-10 and His-34–Ser-35. His-42 provides a ligand contact to a divalent metal cation. 4-CDP-2-C-methyl-D-erythritol 2-phosphate-binding positions include Asp-56–Gly-58, Phe-61–Asp-65, Ala-100–Ala-106, Thr-132–Glu-135, Phe-139, and Arg-142.

This sequence belongs to the IspF family. As to quaternary structure, homotrimer. The cofactor is a divalent metal cation.

The catalysed reaction is 4-CDP-2-C-methyl-D-erythritol 2-phosphate = 2-C-methyl-D-erythritol 2,4-cyclic diphosphate + CMP. It participates in isoprenoid biosynthesis; isopentenyl diphosphate biosynthesis via DXP pathway; isopentenyl diphosphate from 1-deoxy-D-xylulose 5-phosphate: step 4/6. Involved in the biosynthesis of isopentenyl diphosphate (IPP) and dimethylallyl diphosphate (DMAPP), two major building blocks of isoprenoid compounds. Catalyzes the conversion of 4-diphosphocytidyl-2-C-methyl-D-erythritol 2-phosphate (CDP-ME2P) to 2-C-methyl-D-erythritol 2,4-cyclodiphosphate (ME-CPP) with a corresponding release of cytidine 5-monophosphate (CMP). This Alkaliphilus metalliredigens (strain QYMF) protein is 2-C-methyl-D-erythritol 2,4-cyclodiphosphate synthase.